The sequence spans 471 residues: ATP synthase subunit beta (471 aa).

Glycine 156–threonine 163 contacts ATP.

This sequence belongs to the ATPase alpha/beta chains family. F-type ATPases have 2 components, CF(1) - the catalytic core - and CF(0) - the membrane proton channel. CF(1) has five subunits: alpha(3), beta(3), gamma(1), delta(1), epsilon(1). CF(0) has three main subunits: a(1), b(2) and c(9-12). The alpha and beta chains form an alternating ring which encloses part of the gamma chain. CF(1) is attached to CF(0) by a central stalk formed by the gamma and epsilon chains, while a peripheral stalk is formed by the delta and b chains.

It localises to the cell membrane. The enzyme catalyses ATP + H2O + 4 H(+)(in) = ADP + phosphate + 5 H(+)(out). In terms of biological role, produces ATP from ADP in the presence of a proton gradient across the membrane. The catalytic sites are hosted primarily by the beta subunits. This chain is ATP synthase subunit beta, found in Lawsonia intracellularis (strain PHE/MN1-00).